The sequence spans 636 residues: tRNA uridine 5-carboxymethylaminomethyl modification enzyme MnmG (636 aa).

18-23 (GAGHAG) is a binding site for FAD. Residue 281–295 (GPRYCPSIEDKIVRF) coordinates NAD(+).

Belongs to the MnmG family. In terms of assembly, homodimer. Heterotetramer of two MnmE and two MnmG subunits. FAD serves as cofactor.

Its subcellular location is the cytoplasm. Its function is as follows. NAD-binding protein involved in the addition of a carboxymethylaminomethyl (cmnm) group at the wobble position (U34) of certain tRNAs, forming tRNA-cmnm(5)s(2)U34. This chain is tRNA uridine 5-carboxymethylaminomethyl modification enzyme MnmG, found in Lactiplantibacillus plantarum (strain ATCC BAA-793 / NCIMB 8826 / WCFS1) (Lactobacillus plantarum).